Here is a 358-residue protein sequence, read N- to C-terminus: UDP-N-acetylglucosamine--N-acetylmuramyl-(pentapeptide) pyrophosphoryl-undecaprenol N-acetylglucosamine transferase (358 aa).

Residues 11 to 13 (TGG), N120, R161, S188, and Q282 contribute to the UDP-N-acetyl-alpha-D-glucosamine site.

It belongs to the glycosyltransferase 28 family. MurG subfamily.

It localises to the cell inner membrane. The enzyme catalyses di-trans,octa-cis-undecaprenyl diphospho-N-acetyl-alpha-D-muramoyl-L-alanyl-D-glutamyl-meso-2,6-diaminopimeloyl-D-alanyl-D-alanine + UDP-N-acetyl-alpha-D-glucosamine = di-trans,octa-cis-undecaprenyl diphospho-[N-acetyl-alpha-D-glucosaminyl-(1-&gt;4)]-N-acetyl-alpha-D-muramoyl-L-alanyl-D-glutamyl-meso-2,6-diaminopimeloyl-D-alanyl-D-alanine + UDP + H(+). It functions in the pathway cell wall biogenesis; peptidoglycan biosynthesis. Cell wall formation. Catalyzes the transfer of a GlcNAc subunit on undecaprenyl-pyrophosphoryl-MurNAc-pentapeptide (lipid intermediate I) to form undecaprenyl-pyrophosphoryl-MurNAc-(pentapeptide)GlcNAc (lipid intermediate II). The polypeptide is UDP-N-acetylglucosamine--N-acetylmuramyl-(pentapeptide) pyrophosphoryl-undecaprenol N-acetylglucosamine transferase (Synechococcus sp. (strain CC9605)).